We begin with the raw amino-acid sequence, 289 residues long: ATP synthase gamma chain (289 aa).

This sequence belongs to the ATPase gamma chain family. F-type ATPases have 2 components, CF(1) - the catalytic core - and CF(0) - the membrane proton channel. CF(1) has five subunits: alpha(3), beta(3), gamma(1), delta(1), epsilon(1). CF(0) has three main subunits: a, b and c.

It localises to the cell inner membrane. In terms of biological role, produces ATP from ADP in the presence of a proton gradient across the membrane. The gamma chain is believed to be important in regulating ATPase activity and the flow of protons through the CF(0) complex. The polypeptide is ATP synthase gamma chain (Haemophilus influenzae (strain PittGG)).